The sequence spans 833 residues: CUB domain-containing protein 1 (833 aa).

The N-terminal stretch at 1–29 is a signal peptide; sequence MAHSACGFSVALLGALLLGTARLLRGTEA. The Extracellular segment spans residues 30 to 666; sequence SEIALPQRSG…VTLTPRTVDL (637 aa). Asparagine 122, asparagine 180, asparagine 205, asparagine 270, asparagine 310, asparagine 342, and asparagine 386 each carry an N-linked (GlcNAc...) asparagine glycan. The CUB domain maps to 417–540; the sequence is CLDHRYCYRQ…QGLIVSYTPY (124 aa). A disulfide bridge connects residues cysteine 476 and cysteine 499. A helical membrane pass occupies residues 667-687; the sequence is AVVIGAAGGGALLLFALVLII. Residues 688-833 lie on the Cytoplasmic side of the membrane; it reads CFVKKKKKVD…HTQGPVETEE (146 aa). Tyrosine 731 carries the phosphotyrosine modification. Residues 783 to 833 are disordered; sequence AKFTAEELAPSSPPESESEPYTFSHPNKGEIGVRETDIPLLHTQGPVETEE. Positions 809-819 are enriched in basic and acidic residues; sequence NKGEIGVRETD.

As to quaternary structure, interacts with CDH2/N-cadherin, CDH3/P-cadherin, SDC1/syndecan-1, SDC4/syndecan-4 and the serine protease ST14/MT-SP1. Also interacts SRC and PRKCG/protein kinase C gamma. Post-translationally, phosphorylated on tyrosine by kinases of the SRC family such as SRC and YES as well as by the protein kinase C gamma/PRKCG. Dephosphorylated by phosphotyrosine phosphatases. Also phosphorylated by suramin, a heparin analog. Tyrosine phosphorylated in response to dissociation of integrin alpha-6 beta-4 from laminin-5. In terms of processing, N-glycosylated. A soluble form may also be produced by proteolytic cleavage at the cell surface (shedding). Another peptide of 80 kDa (p80) is present in cultured keratinocytes probably due to tryptic cleavage at an unidentified site on the N-terminal side. Converted to p80 by plasmin, a trypsin-like protease.

It is found in the cell membrane. Functionally, may be involved in cell adhesion and cell matrix association. May play a role in the regulation of anchorage versus migration or proliferation versus differentiation via its phosphorylation. May be a novel marker for leukemia diagnosis and for immature hematopoietic stem cell subsets. Belongs to the tetraspanin web involved in tumor progression and metastasis. The sequence is that of CUB domain-containing protein 1 (Cdcp1) from Mus musculus (Mouse).